We begin with the raw amino-acid sequence, 2311 residues long: Proto-oncogene tyrosine-protein kinase ROS (2311 aa).

The first 24 residues, 1–24 (MRNACLLLNRLGAFYFIWISAAYC), serve as a signal peptide directing secretion. Topologically, residues 25-1873 (SFSKNCQDLC…LAKDTVTSPD (1849 aa)) are extracellular. N-linked (GlcNAc...) asparagine glycans are attached at residues N49, N65, N77, N123, N132, N265, N287, N307, N333, N377, N405, N480, N607, N628, N706, N714, N911, N940, N962, N971, N1110, N1154, N1180, N1233, N1255, N1282, N1316, N1470, N1509, N1588, N1628, N1682, N1696, and N1730. 2 Fibronectin type-III domains span residues 110 to 202 (KPGA…ASGV) and 203 to 294 (PTTA…PESK). Positions 571–671 (LPTLPRLVTV…EPFRGMTFEE (101 aa)) constitute a Fibronectin type-III 3 domain. Fibronectin type-III domains lie at 952–1047 (VPES…APEG) and 1051–1158 (APAN…SSDI). 4 consecutive Fibronectin type-III domains span residues 1459 to 1569 (DTEK…TLYG), 1570 to 1669 (VPEG…AKTF), 1671 to 1766 (TPLS…TTAG), and 1767 to 1868 (VPSK…AKDT). Over residues 1754 to 1764 (STSSPTSFKTT) the composition is skewed to low complexity. Residues 1754–1786 (STSSPTSFKTTAGVPSKPGTPKRAEDSKNSVQW) are disordered. The segment covering 1775 to 1786 (KRAEDSKNSVQW) has biased composition (basic and acidic residues). N-linked (GlcNAc...) asparagine glycans are attached at residues N1792, N1795, and N1822. Residues 1874 to 1898 (ITAIVAVIGAVVLGLTIIILFGFVW) traverse the membrane as a helical segment. Residues 1899–2311 (HQRWKSRKPA…SISSAELTSV (413 aa)) lie on the Cytoplasmic side of the membrane. The 280-residue stretch at 1961–2240 (LNLHKLLGSG…KLQEIRHSPL (280 aa)) folds into the Protein kinase domain. ATP is bound by residues 1967–1975 (LGSGAFGEV) and K1996. D2095 acts as the Proton acceptor in catalysis. Phosphotyrosine; by autocatalysis is present on Y2131.

This sequence belongs to the protein kinase superfamily. Tyr protein kinase family. Insulin receptor subfamily. Interacts with VAV3; constitutive interaction mediating VAV3 phosphorylation. As to expression, highest expression in kidney. Also expressed in gonad, thymus, bursa, brain and kidney.

Its subcellular location is the cell membrane. It carries out the reaction L-tyrosyl-[protein] + ATP = O-phospho-L-tyrosyl-[protein] + ADP + H(+). Functionally, orphan receptor tyrosine kinase (RTK) that may activate several downstream signaling pathways related to cell differentiation, proliferation, growth and survival including the PI3 kinase-mTOR signaling pathway. Mediates the phosphorylation of PTPN11, an activator of this pathway. May also phosphorylate and activate the transcription factor STAT3 to control anchorage-independent cell growth. Mediates the phosphorylation and the activation of VAV3, a guanine nucleotide exchange factor regulating cell morphology. May activate other downstream signaling proteins including AKT1, MAPK1, MAPK3, IRS1, and PLCG2. The protein is Proto-oncogene tyrosine-protein kinase ROS (ROS1) of Gallus gallus (Chicken).